Reading from the N-terminus, the 102-residue chain is Protamine-2 (102 aa).

Disordered stretches follow at residues 1–40 and 67–102; these read MVRY…SPEH and HRQQ…CRRH. Phosphoserine occurs at positions 8, 10, and 37.

Belongs to the protamine P2 family. As to quaternary structure, interacts with TDRP. Proteolytic processing into mature chains is required for histone eviction during spermatogenesis. Transition proteins (TNP1 and TNP2) are required for processing. In terms of tissue distribution, testis.

It is found in the nucleus. Its subcellular location is the chromosome. In terms of biological role, protamines substitute for histones in the chromatin of sperm during the haploid phase of spermatogenesis. They compact sperm DNA into a highly condensed, stable and inactive complex. This is Protamine-2 (PRM2) from Pan troglodytes (Chimpanzee).